The following is a 282-amino-acid chain: Large ribosomal subunit protein uL2 (282 aa).

Residues 230-282 form a disordered region; it reads AMNPIDHPLGGGEGRSSGGRHPVSPWGMPAKGYKTRDKKKASSRLIVKRRGQK. The segment covering 265 to 282 has biased composition (basic residues); the sequence is RDKKKASSRLIVKRRGQK.

It belongs to the universal ribosomal protein uL2 family. Part of the 50S ribosomal subunit. Forms a bridge to the 30S subunit in the 70S ribosome.

Functionally, one of the primary rRNA binding proteins. Required for association of the 30S and 50S subunits to form the 70S ribosome, for tRNA binding and peptide bond formation. It has been suggested to have peptidyltransferase activity; this is somewhat controversial. Makes several contacts with the 16S rRNA in the 70S ribosome. In Desulfovibrio desulfuricans (strain ATCC 27774 / DSM 6949 / MB), this protein is Large ribosomal subunit protein uL2.